The primary structure comprises 49 residues: Large ribosomal subunit protein bL33B (49 aa).

The protein belongs to the bacterial ribosomal protein bL33 family.

The sequence is that of Large ribosomal subunit protein bL33B from Lactobacillus delbrueckii subsp. bulgaricus (strain ATCC BAA-365 / Lb-18).